The sequence spans 103 residues: uncharacterized protein (103 aa).

This is an uncharacterized protein from Bacillus subtilis (strain 168).